The primary structure comprises 177 residues: Centromere protein R (177 aa).

Lys8 is covalently cross-linked (Glycyl lysine isopeptide (Lys-Gly) (interchain with G-Cter in SUMO2)). The short motif at 9-13 is the LXXLL motif element; sequence LDGLL. Ser17 carries the phosphoserine modification. The DD1 stretch occupies residues 20–50; the sequence is PSKITRKKSVITYSPTTGTCQMSLFASPTSS. A Glycyl lysine isopeptide (Lys-Gly) (interchain with G-Cter in SUMO2) cross-link involves residue Lys22. Position 28 is a phosphoserine (Ser28). A compositionally biased stretch (polar residues) spans 41-50; the sequence is MSLFASPTSS. The disordered stretch occupies residues 41–81; that stretch reads MSLFASPTSSEEQKHRNGLSNEKRKKLNHPSLTESKESTTK. A Nuclear localization signal motif is present at residues 63 to 66; sequence KRKK. Ser71 bears the Phosphoserine mark. Residues 83–113 adopt a coiled-coil conformation; the sequence is NDEFMMLLSKVEKLSEEIMEIMQNLSSIQAL. The LXXIL motif motif lies at 172–176; that stretch reads LKAIL.

Homodimer; mediated by the coiled coil domain. Isoform 3, but not other isoforms, interacts with the cytoplasmic tail of integrin ITGB3. The relevance of the interaction with ITGB3 is however uncertain, since isoform 3 is mainly nuclear. Interacts with CCNA2 and MTA1. Interacts with NFKB1 NF-kappa-B subunit. Component of the CENPA-CAD complex, composed of CENPI, CENPK, CENPL, CENPO, CENPP, CENPQ, CENPR and CENPS. The CENPA-CAD complex interacts with the CENPA-NAC complex, at least composed of CENPA, CENPC, CENPH, CENPM, CENPN, CENPT and CENPU. Interacts with TASOR. Widely expressed. Expressed in spleen, thymus, prostate, ovary, small intestine and white blood cells. Highly expressed in testis and colon. Isoform 4 is expressed in platelets, lymphocytes and granulocytes.

The protein localises to the nucleus. The protein resides in the chromosome. It is found in the centromere. Its subcellular location is the kinetochore. It localises to the cytoplasm. Its function is as follows. Transcription coregulator that can have both coactivator and corepressor functions. Isoform 1, but not other isoforms, is involved in the coactivation of nuclear receptors for retinoid X (RXRs) and thyroid hormone (TRs) in a ligand-dependent fashion. In contrast, it does not coactivate nuclear receptors for retinoic acid, vitamin D, progesterone receptor, nor glucocorticoid. Acts as a coactivator for estrogen receptor alpha. Acts as a transcriptional corepressor via its interaction with the NFKB1 NF-kappa-B subunit, possibly by interfering with the transactivation domain of NFKB1. Induces apoptosis in breast cancer cells, but not in other cancer cells, via a caspase-2 mediated pathway that involves mitochondrial membrane permeabilization but does not require other caspases. May also act as an inhibitor of cyclin A-associated kinase. Also acts a component of the CENPA-CAD (nucleosome distal) complex, a complex recruited to centromeres which is involved in assembly of kinetochore proteins, mitotic progression and chromosome segregation. May be involved in incorporation of newly synthesized CENPA into centromeres via its interaction with the CENPA-NAC complex. This chain is Centromere protein R (ITGB3BP), found in Homo sapiens (Human).